We begin with the raw amino-acid sequence, 261 residues long: Potassium/proton antiporter CemA (261 aa).

Transmembrane regions (helical) follow at residues 47 to 67 (FLVFLPWGISISFQEGLGPWV) and 138 to 158 (IISHLLTNMICFAISSAYFIM).

The protein belongs to the CemA family.

The protein localises to the plastid. The protein resides in the chloroplast inner membrane. It catalyses the reaction K(+)(in) + H(+)(out) = K(+)(out) + H(+)(in). Functionally, contributes to K(+)/H(+) antiport activity by supporting proton efflux to control proton extrusion and homeostasis in chloroplasts in a light-dependent manner to modulate photosynthesis. Prevents excessive induction of non-photochemical quenching (NPQ) under continuous-light conditions. Indirectly promotes efficient inorganic carbon uptake into chloroplasts. The sequence is that of Potassium/proton antiporter CemA from Ginkgo biloba (Ginkgo).